The primary structure comprises 368 residues: tRNA/tmRNA (uracil-C(5))-methyltransferase (368 aa).

S-adenosyl-L-methionine-binding residues include glutamine 190, tyrosine 218, asparagine 223, glutamate 239, and aspartate 301. The active-site Nucleophile is the cysteine 326. The active-site Proton acceptor is glutamate 360.

This sequence belongs to the class I-like SAM-binding methyltransferase superfamily. RNA M5U methyltransferase family. TrmA subfamily.

The enzyme catalyses uridine(54) in tRNA + S-adenosyl-L-methionine = 5-methyluridine(54) in tRNA + S-adenosyl-L-homocysteine + H(+). The catalysed reaction is uridine(341) in tmRNA + S-adenosyl-L-methionine = 5-methyluridine(341) in tmRNA + S-adenosyl-L-homocysteine + H(+). Dual-specificity methyltransferase that catalyzes the formation of 5-methyluridine at position 54 (m5U54) in all tRNAs, and that of position 341 (m5U341) in tmRNA (transfer-mRNA). The protein is tRNA/tmRNA (uracil-C(5))-methyltransferase of Aliivibrio salmonicida (strain LFI1238) (Vibrio salmonicida (strain LFI1238)).